An 830-amino-acid chain; its full sequence is Scavenger receptor class F member 1 (830 aa).

The N-terminal stretch at 1 to 19 (MGLGLLLPLLLLWTRGTQG) is a signal peptide. At 20 to 421 (SELDPKGQHV…CQPGSGSRDT (402 aa)) the chain is on the extracellular side. EGF-like domains follow at residues 53–87 (TIPICEGPDACQKDEVCVKPGLCRCKPGFFGAHCS), 95–130 (WGPDCRESCPCHPHGQCEPATGACQCQADRWGARCE), 155–191 (WSSTCRRPCQCNTAAARCEQATGACVCKPGWWGRRCS), and 215–249 (WGPECQQQCECVRGRCSAASGECTCPPGFRGARCE). 12 disulfide bridges follow: Cys-57-Cys-69, Cys-63-Cys-75, Cys-77-Cys-86, Cys-99-Cys-111, Cys-105-Cys-118, Cys-120-Cys-129, Cys-159-Cys-172, Cys-165-Cys-179, Cys-181-Cys-190, Cys-219-Cys-230, Cys-225-Cys-237, and Cys-239-Cys-248. N-linked (GlcNAc...) asparagine glycosylation is present at Asn-289. 2 EGF-like domains span residues 302-339 (FGESCEQQCPHCRHGEACEPDTGHCQRCDPGWLGPRCE) and 351-382 (CGSTCPTCVQGSCDTVTGDCVCSAGYWGPSCN). 6 cysteine pairs are disulfide-bonded: Cys-306/Cys-319, Cys-313/Cys-326, Cys-329/Cys-338, Cys-355/Cys-363, Cys-358/Cys-370, and Cys-372/Cys-381. Asn-382 and Asn-393 each carry an N-linked (GlcNAc...) asparagine glycan. The chain crosses the membrane as a helical span at residues 422-442 (ALIAGSLVPLLLLFLGLACCA). Topologically, residues 443–830 (CCCWAPRSDL…VVPISRPPEP (388 aa)) are cytoplasmic. 3 disordered regions span residues 516–539 (GWATDDSFSSDPESGEADEVPAYC), 581–688 (SLAR…SGPV), and 715–830 (FQKG…PPEP). A phosphoserine mark is found at Ser-589 and Ser-606. The span at 634-643 (ESTGPEEAEA) shows a compositional bias: acidic residues. Residues 644-653 (PESFPAAASP) are compositionally biased toward low complexity.

As to quaternary structure, heterophilic interaction with SREC2 via its extracellular domain. The heterophilic interaction is suppressed by the presence of ligand such as Ac-LDL. Interacts with AVIL. In terms of tissue distribution, endothelial cells.

The protein localises to the membrane. Functionally, mediates the binding and degradation of acetylated low density lipoprotein (Ac-LDL). Mediates heterophilic interactions, suggesting a function as adhesion protein. Plays a role in the regulation of neurite-like outgrowth. In Homo sapiens (Human), this protein is Scavenger receptor class F member 1 (SCARF1).